A 305-amino-acid polypeptide reads, in one-letter code: Probable xyloglucan endotransglucosylase/hydrolase protein 8 (305 aa).

Positions 1–31 (METERRIITSCSAMTALFLFMTALMASSSIA) are cleaved as a signal peptide. Residues 32–231 (ATPTQSFEDN…WKKAPFVSSY (200 aa)) form the GH16 domain. 2 N-linked (GlcNAc...) asparagine glycosylation sites follow: N61 and N66. The active-site Nucleophile is the E115. The Proton donor role is filled by E119. Residue E119 coordinates xyloglucan. N123 carries N-linked (GlcNAc...) asparagine glycosylation. 132-134 (QTN) contributes to the xyloglucan binding site. N-linked (GlcNAc...) asparagine glycosylation is present at N138. Xyloglucan is bound by residues 142–144 (NRE), 210–211 (DW), and G215. 2 disulfides stabilise this stretch: C239–C248 and C286–C299. Position 291 (R291) interacts with xyloglucan.

This sequence belongs to the glycosyl hydrolase 16 family. XTH group 1 subfamily. Post-translationally, contains at least one intrachain disulfide bond essential for its enzymatic activity.

Its subcellular location is the secreted. The protein resides in the cell wall. It is found in the extracellular space. The protein localises to the apoplast. The catalysed reaction is breaks a beta-(1-&gt;4) bond in the backbone of a xyloglucan and transfers the xyloglucanyl segment on to O-4 of the non-reducing terminal glucose residue of an acceptor, which can be a xyloglucan or an oligosaccharide of xyloglucan.. Catalyzes xyloglucan endohydrolysis (XEH) and/or endotransglycosylation (XET). Cleaves and religates xyloglucan polymers, an essential constituent of the primary cell wall, and thereby participates in cell wall construction of growing tissues. The polypeptide is Probable xyloglucan endotransglucosylase/hydrolase protein 8 (XTH8) (Arabidopsis thaliana (Mouse-ear cress)).